Here is a 157-residue protein sequence, read N- to C-terminus: MAGMFRIPIAVVQIAAFVHQIHEYLFQVQMTSGPSMMPTLNSGGEFVLLDKLHGRFARSCSVGDVVVSAKPSDSKQHVCKRIIGMPGDTIYVDPTSSNKKITIPLGHVWLAGDNIAHSLDSRNYGPVPMGLIKAKVIARVWPHPHWMSNILNDIDVE.

Residues S35 and K80 contribute to the active site.

This sequence belongs to the peptidase S26 family. IMP1 subfamily. In terms of assembly, heterodimer of 2 subunits, imp1 and imp2.

The protein localises to the mitochondrion inner membrane. Catalyzes the removal of transit peptides required for the targeting of proteins from the mitochondrial matrix, across the inner membrane, into the inter-membrane space. The polypeptide is Mitochondrial inner membrane protease subunit 1 (imp1) (Schizosaccharomyces pombe (strain 972 / ATCC 24843) (Fission yeast)).